A 220-amino-acid chain; its full sequence is METDRQGSESGACDGCCSDCSDEGTQSQQPTIFTDTRASLARRDYAKLLASVGGLTAVASLTAPLAGLTRVFEREYTGPVYSDGIYLVDGDGNRIEEKALSEGEKMTVFPEPRPGIEKAPTLLVRHAEDAYSDAVKTEYMVAGYTAYSKVCTHAGCMVSNEEDGTLVCPCHFGKFDPTDGAAVVGGPPSRALPQLPITVSSEGYLIATGDFNGPVGPGGD.

The Rieske domain maps to 118-206 (KAPTLLVRHA…ITVSSEGYLI (89 aa)). Positions 151, 153, 168, and 171 each coordinate [2Fe-2S] cluster. C156 and C170 are disulfide-bonded.

In terms of assembly, probable multiprotein complex; a catalytic heterodimer of an alpha and beta chain is proposed to associate with additional subunits involved in membrane attachment and electron transfer. [2Fe-2S] cluster serves as cofactor.

Its subcellular location is the cell membrane. In terms of biological role, the respiratory membrane-bound nitrate reductase enzyme complex plays a role in generation of metabolic energy by using nitrate as a terminal electron acceptor during anaerobic conditions. Proposed Rieske subunit involved in a protonmotive Q-cycle mechanism-based electron transfer electrons to the beta subunit. The sequence is that of Putative respiratory nitrate reductase subunit Rieske (narB) from Haloferax mediterranei (strain ATCC 33500 / DSM 1411 / JCM 8866 / NBRC 14739 / NCIMB 2177 / R-4) (Halobacterium mediterranei).